A 1004-amino-acid chain; its full sequence is Importin subunit beta-5 (1004 aa).

Methionine 1 carries the post-translational modification N-acetylmethionine. An Importin N-terminal domain is found at 21-100 (AETQLLQWCD…REVLLKLCLN (80 aa)).

Belongs to the importin beta family. Interacts with NAP1.

It is found in the cytoplasm. It localises to the nucleus. The protein resides in the nuclear pore complex. In terms of biological role, required for nuclear protein import and mediates docking of import substrate to distinct nucleoporins. Serves a receptor for nuclear localization signals. Mediates the nuclear import of TATA-binding protein (TBP) and of histones H2A and H2B. The polypeptide is Importin subunit beta-5 (KAP114) (Saccharomyces cerevisiae (strain ATCC 204508 / S288c) (Baker's yeast)).